Consider the following 228-residue polypeptide: 2,3-bisphosphoglycerate-dependent phosphoglycerate mutase (228 aa).

Residues 8 to 15 (RHGQSVWN), 21 to 22 (TG), R60, 87 to 90 (ERHY), K98, 114 to 115 (RR), and 183 to 184 (GN) contribute to the substrate site. The active-site Tele-phosphohistidine intermediate is the H9. E87 serves as the catalytic Proton donor/acceptor.

The protein belongs to the phosphoglycerate mutase family. BPG-dependent PGAM subfamily.

The catalysed reaction is (2R)-2-phosphoglycerate = (2R)-3-phosphoglycerate. The protein operates within carbohydrate degradation; glycolysis; pyruvate from D-glyceraldehyde 3-phosphate: step 3/5. In terms of biological role, catalyzes the interconversion of 2-phosphoglycerate and 3-phosphoglycerate. This chain is 2,3-bisphosphoglycerate-dependent phosphoglycerate mutase, found in Staphylococcus carnosus (strain TM300).